Consider the following 148-residue polypeptide: 3-hydroxyacyl-[acyl-carrier-protein] dehydratase FabZ (148 aa).

Histidine 50 is an active-site residue.

This sequence belongs to the thioester dehydratase family. FabZ subfamily.

It localises to the cytoplasm. The enzyme catalyses a (3R)-hydroxyacyl-[ACP] = a (2E)-enoyl-[ACP] + H2O. Its function is as follows. Involved in unsaturated fatty acids biosynthesis. Catalyzes the dehydration of short chain beta-hydroxyacyl-ACPs and long chain saturated and unsaturated beta-hydroxyacyl-ACPs. This is 3-hydroxyacyl-[acyl-carrier-protein] dehydratase FabZ from Lactobacillus helveticus (strain DPC 4571).